The primary structure comprises 458 residues: ATP synthase subunit beta (458 aa).

148 to 155 is an ATP binding site; the sequence is GGAGVGKT.

It belongs to the ATPase alpha/beta chains family. In terms of assembly, F-type ATPases have 2 components, CF(1) - the catalytic core - and CF(0) - the membrane proton channel. CF(1) has five subunits: alpha(3), beta(3), gamma(1), delta(1), epsilon(1). CF(0) has three main subunits: a(1), b(2) and c(9-12). The alpha and beta chains form an alternating ring which encloses part of the gamma chain. CF(1) is attached to CF(0) by a central stalk formed by the gamma and epsilon chains, while a peripheral stalk is formed by the delta and b chains.

It is found in the cell inner membrane. It carries out the reaction ATP + H2O + 4 H(+)(in) = ADP + phosphate + 5 H(+)(out). In terms of biological role, produces ATP from ADP in the presence of a proton gradient across the membrane. The catalytic sites are hosted primarily by the beta subunits. The polypeptide is ATP synthase subunit beta (Alkalilimnicola ehrlichii (strain ATCC BAA-1101 / DSM 17681 / MLHE-1)).